The sequence spans 449 residues: MREILHIQGGQCGNQIGSKFWEVICDEHGIDSTGRYSGDTADLQLERINVYYNEASGGRYVPRAVLMDLEPGTMDSIRSGPFGQIFRPDNFVFGQSGAGNNWAKGHYTEGAELIDAVLDVVRKEAENCDCLQGFQVCHSLGGGTGSGMGTLLISKIREEYPDRMMLTFSVFPSPKVSDTVVEPYNATLSVHQLVENADECMVLDNEALYDICFRTLKLSTPSFGDLNHLISATMSGVTCSLRFPGQLNSDLRKLAVNLIPFPRLHFFMVGFAPLTSRGSQQYISLTVPELTQQMWDSKNMMCAADPRHGRYLTASAIFRGQMSTKEVDEQILNIQNKNSSYFVEWIPNNVKSSVCDIPPKGLKMAATFVGNSTSIQEMFRRVSEQFTAMFRRKAFLHWYTGEGMDEMEFTEAESNMNDLVAEYQQYQDATADEEGEYDVEEEEEGDYET.

GTP-binding residues include Gln-11, Glu-70, Ser-139, Gly-143, Thr-144, Gly-145, Asn-205, and Asn-227. Mg(2+) is bound at residue Glu-70. The disordered stretch occupies residues 427 to 449; sequence QDATADEEGEYDVEEEEEGDYET. Positions 430-449 are enriched in acidic residues; the sequence is TADEEGEYDVEEEEEGDYET.

It belongs to the tubulin family. As to quaternary structure, dimer of alpha and beta chains. A typical microtubule is a hollow water-filled tube with an outer diameter of 25 nm and an inner diameter of 15 nM. Alpha-beta heterodimers associate head-to-tail to form protofilaments running lengthwise along the microtubule wall with the beta-tubulin subunit facing the microtubule plus end conferring a structural polarity. Microtubules usually have 13 protofilaments but different protofilament numbers can be found in some organisms and specialized cells. Requires Mg(2+) as cofactor.

Its subcellular location is the cytoplasm. The protein localises to the cytoskeleton. In terms of biological role, tubulin is the major constituent of microtubules, a cylinder consisting of laterally associated linear protofilaments composed of alpha- and beta-tubulin heterodimers. Microtubules grow by the addition of GTP-tubulin dimers to the microtubule end, where a stabilizing cap forms. Below the cap, tubulin dimers are in GDP-bound state, owing to GTPase activity of alpha-tubulin. The protein is Tubulin beta-5 chain (TUBB5) of Arabidopsis thaliana (Mouse-ear cress).